We begin with the raw amino-acid sequence, 199 residues long: MAHSPIHGRITETEGDLFDAPDGAALIHACNCQGSWGKGIAQAFKNKYPAAFTIYRAHCQNLLSKASYRTVNPVPDEGSLTGNSRKVRLPEGTALVIPPQEHDHMGRHKKHWIICLFTSRGFGRGVSSPAVIIQNTELAVVDMRRQIAELHAEEGLGGFSGELWSCRFNSGLFGVDWALSRKVLEDAGLEVTVVSPREG.

Positions 1–199 constitute a Macro domain; it reads MAHSPIHGRI…EVTVVSPREG (199 aa). Residues 15-17, 29-31, 36-41, and 168-174 contribute to the substrate site; these read GDL, ACN, WGKGIA, and FNSGLFG.

The protein belongs to the POA1 family.

It catalyses the reaction ADP-alpha-D-ribose 1''-phosphate + H2O = ADP-D-ribose + phosphate. Functionally, highly specific phosphatase involved in the metabolism of ADP-ribose 1''-phosphate (Appr1p) which is produced as a consequence of tRNA splicing. The protein is ADP-ribose 1''-phosphate phosphatase (poa1) of Aspergillus clavatus (strain ATCC 1007 / CBS 513.65 / DSM 816 / NCTC 3887 / NRRL 1 / QM 1276 / 107).